The primary structure comprises 348 residues: MTAPSQVLKIRRPDDWHLHLRDGDMLKTVVPYTSEIYGRAIVMPNLAPPVTTVEAAVAYRQRILDAVPAGHNFTPLMTCYLTDSLDPNELERGFNEGVFTAAKLYPANATTNSSHGVTSIDAIMPVLERMEKIGMPLLVHGEVTHADIDIFDREAHFIESVMEPLRQRLTALKVVFEHITTKDAADYVHDGNERLAATITPQHLMFNRNHMLVGGVRPHLYCLPILKRNIHQQALRELVASGFNRVFLGTDSAPHARHRKESSCGCAGCFNAPTALGSYATVFEEMNALQHFEAFCSVNGPQFYGLPVNDTFIELVREEQQVAESIALTDDTLVPFLAGETVRWSVKQ.

His17 and His19 together coordinate Zn(2+). Substrate is bound by residues 19–21 and Asn45; that span reads HLR. Zn(2+)-binding residues include Lys103, His140, and His178. An N6-carboxylysine modification is found at Lys103. His140 is a substrate binding site. Residue Leu223 coordinates substrate. A Zn(2+)-binding site is contributed by Asp251. Residue Asp251 is part of the active site. His255 and Ala267 together coordinate substrate.

The protein belongs to the metallo-dependent hydrolases superfamily. DHOase family. Class II DHOase subfamily. Homodimer. Requires Zn(2+) as cofactor.

It carries out the reaction (S)-dihydroorotate + H2O = N-carbamoyl-L-aspartate + H(+). Its pathway is pyrimidine metabolism; UMP biosynthesis via de novo pathway; (S)-dihydroorotate from bicarbonate: step 3/3. Catalyzes the reversible cyclization of carbamoyl aspartate to dihydroorotate. The chain is Dihydroorotase from Shigella boydii serotype 18 (strain CDC 3083-94 / BS512).